We begin with the raw amino-acid sequence, 508 residues long: Protein NODULATION SIGNALING PATHWAY 2 (508 aa).

A disordered region spans residues 75–98; it reads ITTTTTTTTTTDEEEEEMETTTTT. In terms of domain architecture, GRAS spans 108-500; sequence VGDDSKGLKL…RRLLSASLWT (393 aa). Positions 115-190 are leucine repeat I (LRI); it reads LKLVHLLMAG…NNHHHHNNNK (76 aa). The interval 209–273 is VHIID; that stretch reads FQLLQDMSPY…NNGPHLRITA (65 aa). Positions 240 to 244 match the VHIID motif; it reads VHVID. Positions 289–321 are leucine repeat II (LRII); sequence ETGRRLTSFAASLGQPFSFHHCRLDSDETFRPS. The segment at 331 to 422 is PFYRE; that stretch reads LVFNCMLNLP…RVFFGPRIAG (92 aa). The tract at residues 425 to 500 is SAW; sequence GRIYRTGGEE…RRLLSASLWT (76 aa).

It belongs to the GRAS family. As to quaternary structure, interacts with RAM1. Interacts with IPN2 and RAD1. As to expression, expressed in roots, shoots and leaves.

The protein localises to the nucleus membrane. It localises to the endoplasmic reticulum. Transcriptional regulator essential for Nod-factor-induced gene expression. Acts downstream of calcium spiking and DMI3, a calcium/calmodulin-dependent protein kinase (CCaMK). Transcription factor involved in the control of strigolactone biosynthesis in roots through the activation of the beta-carotene isomerase D27, which participates in a pathway leading to biosynthesis of strigolactones. The protein is Protein NODULATION SIGNALING PATHWAY 2 of Medicago truncatula (Barrel medic).